The sequence spans 556 residues: Urocanate hydratase (556 aa).

Residues 52–53 (GG), glutamine 130, 176–178 (GMG), glutamate 196, arginine 201, 242–243 (NA), 263–267 (QTSAH), 273–274 (YL), and tyrosine 322 each bind NAD(+). Cysteine 410 is a catalytic residue. An NAD(+)-binding site is contributed by glycine 492.

This sequence belongs to the urocanase family. NAD(+) is required as a cofactor.

The protein resides in the cytoplasm. The catalysed reaction is 4-imidazolone-5-propanoate = trans-urocanate + H2O. It functions in the pathway amino-acid degradation; L-histidine degradation into L-glutamate; N-formimidoyl-L-glutamate from L-histidine: step 2/3. Functionally, catalyzes the conversion of urocanate to 4-imidazolone-5-propionate. This chain is Urocanate hydratase, found in Shewanella sp. (strain ANA-3).